Here is a 1230-residue protein sequence, read N- to C-terminus: Soluble starch synthase 3, chloroplastic/amyloplastic (1230 aa).

The transit peptide at 1–60 directs the protein to the chloroplast; that stretch reads MDVPFPLHRSLSCTSVSNAITHLKIKPILGFVSHGTTSLSVQSSSWRKDGMVTGVSFSIC. Residues 66–189 form a disordered region; the sequence is RRRRKVSTPR…KDAVKLNKSK (124 aa). Over residues 124-145 the composition is skewed to basic and acidic residues; the sequence is VEARVETSDDDTKGVVRDHKFL. A compositionally biased stretch (polar residues) spans 152–170; it reads NGSTKSISMSPVRVSSQFV. Over residues 177-189 the composition is skewed to basic and acidic residues; it reads GDDKDAVKLNKSK. Position 794 (lysine 794) interacts with ADP-alpha-D-glucose.

Belongs to the glycosyltransferase 1 family. Bacterial/plant glycogen synthase subfamily. Tuber, sink and source leaves.

It localises to the plastid. It is found in the chloroplast. The protein localises to the amyloplast. The enzyme catalyses [(1-&gt;4)-alpha-D-glucosyl](n) + ADP-alpha-D-glucose = [(1-&gt;4)-alpha-D-glucosyl](n+1) + ADP + H(+). Its pathway is glycan biosynthesis; starch biosynthesis. Functionally, may account for most of the soluble starch synthase activity in the tubers. Contributes only a tiny percentage of the granule-bound activity, but may also contribute to the deposition of transient starch in chloroplasts of leaves. This is Soluble starch synthase 3, chloroplastic/amyloplastic (SS3) from Solanum tuberosum (Potato).